A 737-amino-acid chain; its full sequence is Glycogen [starch] synthase, muscle (737 aa).

Ser8 bears the Phosphoserine; by AMPK and PKA mark. Position 11 is a phosphoserine (Ser11). Position 39 (Lys39) interacts with UDP. UDP-alpha-D-glucose contacts are provided by His205 and Arg211. Alpha-D-glucose 6-phosphate contacts are provided by His291, Glu292, Gln294, His297, and Lys301. Position 331 (Arg331) interacts with UDP. A UDP-alpha-D-glucose-binding site is contributed by Arg331. The residue at position 412 (Ser412) is a Phosphoserine. His501 contributes to the alpha-D-glucose 6-phosphate binding site. Positions 510, 512, and 513 each coordinate UDP-alpha-D-glucose. Thr515 is a binding site for UDP. The alpha-D-glucose 6-phosphate site is built by Arg582 and Arg586. The disordered stretch occupies residues 634–737; the sequence is YRYPRPASVP…PTSSLGEERN (104 aa). Ser641 carries the phosphoserine; by DYRK2, GSK3-alpha, GSK3-beta and PASK modification. Residues Ser645 and Ser649 each carry the phosphoserine; by GSK3-alpha and GSK3-beta modification. Residue Ser652 is modified to Phosphoserine. Residue Ser653 is modified to Phosphoserine; by GSK3-alpha and GSK3-beta. Ser657 is modified (phosphoserine; by CK2). Over residues 658–681 the composition is skewed to acidic residues; it reads EDEEDPRNGPLEEDGERYDEDEEA. Residues 682–695 are compositionally biased toward basic and acidic residues; it reads AKDRRNIRAPEWPR. Ser698 carries the phosphoserine modification. Residues 698–714 show a composition bias toward polar residues; that stretch reads SCTSSTSGSKRNSVDTA. Thr700 is modified (phosphothreonine). Ser710 carries the phosphoserine modification. Positions 715–737 are enriched in low complexity; sequence TSSSLSTPSEPLSPTSSLGEERN. Thr721 carries the post-translational modification Phosphothreonine. Phosphoserine is present on residues Ser727 and Ser731.

Belongs to the glycosyltransferase 3 family. Part of the GYS1-GYG1 complex, a heterooctamer composed of a tetramer of GYS1 and 2 dimers of GYG1, where each GYS1 protomer binds to one GYG1 subunit (via GYG1 C-terminus); the GYS1 tetramer may dissociate from GYG1 dimers to continue glycogen polymerization on its own. Post-translationally, phosphorylation at Ser-8 by AMPK inactivates the enzyme activity. Primed phosphorylation at Ser-657 (site 5) by CSNK2A1 and CSNK2A2 is required for inhibitory phosphorylation at Ser-641 (site 3a), Ser-645 (site 3b), Ser-649 (site 3c) and Ser-653 (site 4) by GSK3A an GSK3B. Phosphorylated at Ser-641 by PASK, leading to inactivation; phosphorylation by PASK is inhibited by glycogen. Phosphorylated at Ser-641 by DYRK2, leading to inactivation. Dephosphorylation at Ser-641 and Ser-645 by PP1 activates the enzyme.

The catalysed reaction is [(1-&gt;4)-alpha-D-glucosyl](n) + UDP-alpha-D-glucose = [(1-&gt;4)-alpha-D-glucosyl](n+1) + UDP + H(+). It functions in the pathway glycan biosynthesis; glycogen biosynthesis. With respect to regulation, allosteric activation by glucose-6-phosphate. Phosphorylation reduces the activity towards UDP-glucose. When in the non-phosphorylated state, glycogen synthase does not require glucose-6-phosphate as an allosteric activator; when phosphorylated it does. Its function is as follows. Glycogen synthase participates in the glycogen biosynthetic process along with glycogenin and glycogen branching enzyme. Extends the primer composed of a few glucose units formed by glycogenin by adding new glucose units to it. In this context, glycogen synthase transfers the glycosyl residue from UDP-Glc to the non-reducing end of alpha-1,4-glucan. The sequence is that of Glycogen [starch] synthase, muscle (GYS1) from Pongo abelii (Sumatran orangutan).